The following is a 460-amino-acid chain: Elongation factor 1-alpha (460 aa).

A N,N,N-trimethylglycine modification is found at glycine 2. An N6,N6-dimethyllysine; alternate modification is found at lysine 3. Lysine 3 carries the N6-methyllysine; alternate modification. The tr-type G domain occupies 5-240 (KLHVNVVVIG…DAIEPPVRPS (236 aa)). The interval 14-21 (GHVDSGKS) is G1. GTP is bound at residue 14-21 (GHVDSGKS). An N6-methyllysine modification is found at lysine 30. A G2 region spans residues 70-74 (GITID). Lysine 79 is subject to N6,N6,N6-trimethyllysine. A G3 region spans residues 91-94 (DAPG). GTP-binding positions include 91 to 95 (DAPGH) and 153 to 156 (NKMD). Positions 153–156 (NKMD) are G4. Residues 192–194 (SGW) are G5. At lysine 316 the chain carries N6,N6-dimethyllysine; alternate. An N6-methyllysine; alternate modification is found at lysine 316. The residue at position 390 (lysine 390) is an N6-methyllysine.

The protein belongs to the TRAFAC class translation factor GTPase superfamily. Classic translation factor GTPase family. EF-Tu/EF-1A subfamily.

Its subcellular location is the cytoplasm. Its function is as follows. This protein promotes the GTP-dependent binding of aminoacyl-tRNA to the A-site of ribosomes during protein biosynthesis. This is Elongation factor 1-alpha (TEF1) from Schizophyllum commune (Split gill fungus).